We begin with the raw amino-acid sequence, 294 residues long: MKLGFVGAGRVGSTSAFTCLLNLDVDEIALVDIAEDLAVGEAMDLAHAAAGIDKYPKIVGGADYSLLKGSEIIVVTAGLARKPGMTRLDLAHKNAGIIKDIAKKIVENAPESKILVVTNPMDVMTYIMWKESGKPRNEVFGMGNQLDSQRLKERLYNAGARNIRRAWIIGEHGDSMFVAKSLADFDGEVDWEAVENDVRFVAAEVIKRKGATIFGPAVAIYRMVKAVVEDTGEIIPTSMILQGEYGIENVAVGVPAKLGKNGAEVADIKLSDEEIEKLRNSAKILRERLEELGY.

NAD(+)-binding positions include 7–12 (GAGRVG) and Asp32. 2 residues coordinate substrate: Arg81 and Arg87. Residues Asn94 and 117-119 (VTN) each bind NAD(+). Substrate contacts are provided by Asn119 and Arg150. The active-site Proton acceptor is His172.

It belongs to the LDH/MDH superfamily. In terms of assembly, homodimer.

It is found in the cytoplasm. The enzyme catalyses (S)-malate + NAD(+) = oxaloacetate + NADH + H(+). Functionally, catalyzes the reversible oxidation of malate to oxaloacetate. Can also oxidize tartrate. The protein is Malate dehydrogenase (mdh) of Archaeoglobus fulgidus (strain ATCC 49558 / DSM 4304 / JCM 9628 / NBRC 100126 / VC-16).